The sequence spans 194 residues: Protein phosphatase 1 regulatory subunit 1B (194 aa).

Position 1 is an N-acetylmethionine (Met-1). The interval 1–194 (MDPKDRKKIQ…GEEPQHPSPP (194 aa)) is disordered. Phosphothreonine; by PKA is present on Thr-34. The segment covering 41-63 (VSEHSSPEEEASPHQRTSGEGHH) has biased composition (basic and acidic residues). A phosphoserine mark is found at Ser-45 and Ser-46. A Phosphothreonine modification is found at Thr-75. Residues 84-95 (HLQTISNLSENQ) show a composition bias toward polar residues. A phosphoserine mark is found at Ser-97 and Ser-130. Acidic residues predominate over residues 113–131 (QEDDEEDEDEEEDEEEDSQ). The segment covering 160–170 (PPLDEPQRDGN) has biased composition (basic and acidic residues). Ser-192 is subject to Phosphoserine.

This sequence belongs to the protein phosphatase inhibitor 1 family. In terms of processing, dopamine- and cyclic AMP-regulated neuronal phosphoprotein. Post-translationally, phosphorylation of Thr-34 is required for activity.

The protein resides in the cytoplasm. Its function is as follows. Inhibitor of protein-phosphatase 1. In Mus musculus (Mouse), this protein is Protein phosphatase 1 regulatory subunit 1B (Ppp1r1b).